The primary structure comprises 118 residues: UPF0449 protein C19orf25 homolog (118 aa).

Y63 carries the phosphotyrosine modification. The stretch at 69–105 (YVAMNQRLQQAGAQLEQKRADLQQAGEELERDISQVG) forms a coiled coil.

Belongs to the UPF0449 family.

The chain is UPF0449 protein C19orf25 homolog from Bos taurus (Bovine).